A 341-amino-acid polypeptide reads, in one-letter code: Beta-hexosaminidase (341 aa).

Residues Asp-61, Arg-69, Arg-134, and 164 to 165 (KH) each bind substrate. Catalysis depends on His-177, which acts as the Proton donor/acceptor. Asp-249 serves as the catalytic Nucleophile.

Belongs to the glycosyl hydrolase 3 family. NagZ subfamily.

Its subcellular location is the cytoplasm. It catalyses the reaction Hydrolysis of terminal non-reducing N-acetyl-D-hexosamine residues in N-acetyl-beta-D-hexosaminides.. It functions in the pathway cell wall biogenesis; peptidoglycan recycling. Functionally, plays a role in peptidoglycan recycling by cleaving the terminal beta-1,4-linked N-acetylglucosamine (GlcNAc) from peptide-linked peptidoglycan fragments, giving rise to free GlcNAc, anhydro-N-acetylmuramic acid and anhydro-N-acetylmuramic acid-linked peptides. This chain is Beta-hexosaminidase, found in Shewanella frigidimarina (strain NCIMB 400).